Reading from the N-terminus, the 336-residue chain is Protein FPV127 (336 aa).

The segment at 1–22 (MGGGLVLPTRDPPKEQDTSETA) is disordered.

It belongs to the poxviruses A16/G9/J5 family.

This is Protein FPV127 from Vertebrata (FPV).